Here is a 415-residue protein sequence, read N- to C-terminus: S-inosyl-L-homocysteine hydrolase (415 aa).

Aspartate 123 and glutamate 148 together coordinate substrate. 149 to 151 (TTT) lines the NAD(+) pocket. Residues lysine 178 and aspartate 182 each contribute to the substrate site. NAD(+) contacts are provided by residues asparagine 183, 212–217 (GYGWCG), glutamate 235, 291–293 (AGH), and asparagine 337.

Belongs to the adenosylhomocysteinase family. In terms of assembly, exists both as a homotetramer and a homodimer, in a 4:1 ratio. It depends on NAD(+) as a cofactor.

It is found in the cytoplasm. The enzyme catalyses S-inosyl-L-homocysteine + H2O = L-homocysteine + inosine. It participates in amino-acid biosynthesis; S-adenosyl-L-methionine biosynthesis. In terms of biological role, catalyzes the hydrolysis of S-inosyl-L-homocysteine (SIH) to L-homocysteine (Hcy) and inosine. Likely functions in a S-adenosyl-L-methionine (SAM) recycling pathway from S-adenosyl-L-homocysteine (SAH) produced from SAM-dependent methylation reactions. Can also catalyze the reverse reaction in vitro, i.e. the synthesis of SIH from Hcy and inosine. Is specific for SIH and inosine as it is unable to either hydrolyze SAH or synthesize SAH from adenosine and Hcy. The polypeptide is S-inosyl-L-homocysteine hydrolase (Methanocaldococcus jannaschii (strain ATCC 43067 / DSM 2661 / JAL-1 / JCM 10045 / NBRC 100440) (Methanococcus jannaschii)).